The chain runs to 220 residues: Ribosomal RNA large subunit methyltransferase E (220 aa).

The S-adenosyl-L-methionine site is built by G60, W62, D92, D108, and D133. The active-site Proton acceptor is K173.

The protein belongs to the class I-like SAM-binding methyltransferase superfamily. RNA methyltransferase RlmE family.

It is found in the cytoplasm. The enzyme catalyses uridine(2552) in 23S rRNA + S-adenosyl-L-methionine = 2'-O-methyluridine(2552) in 23S rRNA + S-adenosyl-L-homocysteine + H(+). Its function is as follows. Specifically methylates the uridine in position 2552 of 23S rRNA at the 2'-O position of the ribose in the fully assembled 50S ribosomal subunit. This chain is Ribosomal RNA large subunit methyltransferase E, found in Burkholderia multivorans (strain ATCC 17616 / 249).